Consider the following 225-residue polypeptide: MFIGIVSLFLTVLVYLGAKKVYQRFPRVYTSPLLVTPAVLVGLLLLVNVPYESYNLGGGLLTDMLQPATVAFAIPLYKYFPVLKKYAVEIILNVAVGSCIAIISTALIAKWLHLGTGLIDSLVPRSVTTPIAMNVSEMIGGMPAVTAVFVILTALLGTVIGPMVIRYFRIDNEIARGVLLGTSAHGAGTSKAFELSSVSGTISSVSMILAAIMTLCAAPFLLSFM.

The next 6 membrane-spanning stretches (helical) occupy residues 1–21 (MFIGIVSLFLTVLVYLGAKKV), 31–51 (SPLLVTPAVLVGLLLLVNVPY), 56–76 (LGGGLLTDMLQPATVAFAIPL), 88–108 (VEIILNVAVGSCIAIISTALI), 145–165 (VTAVFVILTALLGTVIGPMVI), and 205–225 (VSMILAAIMTLCAAPFLLSFM).

It belongs to the YohK (E.coli)/YwbG (IPA-22R) (B.subtilis) family.

The protein resides in the cell membrane. This is an uncharacterized protein from Bacillus subtilis (strain 168).